Here is a 24-residue protein sequence, read N- to C-terminus: Caerulein precursor fragment BM1 (24 aa).

In terms of tissue distribution, expressed by the skin glands.

Its subcellular location is the secreted. Antimicrobial peptide. The chain is Caerulein precursor fragment BM1 from Xenopus boumbaensis (Mawa clawed frog).